The primary structure comprises 65 residues: Large ribosomal subunit protein bL33m (65 aa).

Residues 1–8 (MLLSAVSF) constitute a mitochondrion transit peptide.

This sequence belongs to the bacterial ribosomal protein bL33 family. As to quaternary structure, component of the mitochondrial ribosome large subunit (39S) which comprises a 16S rRNA and about 50 distinct proteins.

It localises to the mitochondrion. The polypeptide is Large ribosomal subunit protein bL33m (Mrpl33) (Mus musculus (Mouse)).